The following is a 415-amino-acid chain: UV excision repair protein RAD23 homolog B (415 aa).

A Ubiquitin-like domain is found at 1 to 79 (MQVTLKTLQQ…VVVMVTKPKA (79 aa)). Residues 80–175 (VTSAVPATTQ…STPGDSSRSN (96 aa)) form a disordered region. The segment covering 84 to 143 (VPATTQQSSSPSTTTVSSSPAAAVAQAPAPTPALAPTSTPASTTPASTTASSEPAPTGAT) has biased composition (low complexity). Threonine 155 carries the post-translational modification Phosphothreonine. Phosphoserine is present on residues serine 160 and serine 174. Position 186 is a phosphothreonine (threonine 186). Residues 188-228 (QSYENMVTEIMSMGYEREQVIAALRASFNNPDRAVEYLLMG) enclose the UBA 1 domain. Residue serine 199 is modified to Phosphoserine. Tyrosine 202 carries the phosphotyrosine modification. One can recognise an STI1 domain in the interval 274 to 317 (HPLEFLRNQPQFQQMRQIIQQNPSLLPALLQQIGRENPQLLQQI). The disordered stretch occupies residues 334 to 355 (EAGGQGGGGGGGGGGGGGGGGI). The segment covering 336–355 (GGQGGGGGGGGGGGGGGGGI) has biased composition (gly residues). Positions 370–410 (PQEKEAIERLKALGFPEGLVIQAYFACEKNENLAANFLLQQ) constitute a UBA 2 domain.

It belongs to the RAD23 family. In terms of assembly, component of the XPC complex composed of XPC, RAD23B and CETN2. Interacts with NGLY1 and PSMC1. Interacts with ATXN3. Interacts with AMFR. Interacts with VCP; the interaction is indirect and mediated by NGLY1.

It is found in the nucleus. The protein resides in the cytoplasm. Functionally, multiubiquitin chain receptor involved in modulation of proteasomal degradation. Binds to polyubiquitin chains. Proposed to be capable to bind simultaneously to the 26S proteasome and to polyubiquitinated substrates and to deliver ubiquitinated proteins to the proteasome. May play a role in endoplasmic reticulum-associated degradation (ERAD) of misfolded glycoproteins by association with PNGase and delivering deglycosylated proteins to the proteasome. In terms of biological role, involved in global genome nucleotide excision repair (GG-NER) by acting as component of the XPC complex. Cooperatively with Cetn2 appears to stabilize Xpc. May protect Xpc from proteasomal degradation. Its function is as follows. The XPC complex is proposed to represent the first factor bound at the sites of DNA damage and together with other core recognition factors, Xpa, RPA and the TFIIH complex, is part of the pre-incision (or initial recognition) complex. The XPC complex recognizes a wide spectrum of damaged DNA characterized by distortions of the DNA helix such as single-stranded loops, mismatched bubbles or single-stranded overhangs. The orientation of XPC complex binding appears to be crucial for inducing a productive NER. XPC complex is proposed to recognize and to interact with unpaired bases on the undamaged DNA strand which is followed by recruitment of the TFIIH complex and subsequent scanning for lesions in the opposite strand in a 5'-to-3' direction by the NER machinery. Cyclobutane pyrimidine dimers (CPDs) which are formed upon UV-induced DNA damage esacpe detection by the XPC complex due to a low degree of structural perurbation. Instead they are detected by the UV-DDB complex which in turn recruits and cooperates with the XPC complex in the respective DNA repair. In vitro, the XPC:RAD23B dimer is sufficient to initiate NER; it preferentially binds to cisplatin and UV-damaged double-stranded DNA and also binds to a variety of chemically and structurally diverse DNA adducts. XPC:RAD23B contacts DNA both 5' and 3' of a cisplatin lesion with a preference for the 5' side. Xpc:Rad22b induces a bend in DNA upon binding. Xpc:Rad23b stimulates the activity of DNA glycosylases Tdg and Smug1. The chain is UV excision repair protein RAD23 homolog B (Rad23b) from Rattus norvegicus (Rat).